The primary structure comprises 177 residues: O-acetyl-ADP-ribose deacetylase (177 aa).

One can recognise a Macro domain in the interval 1 to 175; it reads MKTRIHVVQG…LYERLLTQQG (175 aa). Residues 11-12, Asn25, 33-35, and 122-126 each bind substrate; these read DI, GVD, and STGVY. Residue Asp35 is the Proton acceptor of the active site.

This sequence belongs to the MacroD-type family. YmdB subfamily. In terms of assembly, homodimer. Interacts with RNase III.

The enzyme catalyses 3''-O-acetyl-ADP-D-ribose + H2O = ADP-D-ribose + acetate + H(+). The catalysed reaction is 2''-O-acetyl-ADP-D-ribose + H2O = ADP-D-ribose + acetate + H(+). Deacetylates O-acetyl-ADP ribose to yield ADP-ribose and free acetate. Down-regulates ribonuclease 3 (RNase III) activity. Acts by interacting directly with the region of the ribonuclease that is required for dimerization/activation. The polypeptide is O-acetyl-ADP-ribose deacetylase (Escherichia coli O157:H7).